The sequence spans 332 residues: D-alanine--D-alanine ligase (332 aa).

Residues 1 to 17 (MPMTMTQSATNPTATPV) show a composition bias toward polar residues. Positions 1-28 (MPMTMTQSATNPTATPVSANKASANAAT) are disordered. Positions 18-28 (SANKASANAAT) are enriched in low complexity. The ATP-grasp domain occupies 132–329 (KQLWHGCGLS…FEQLCWHILA (198 aa)). ATP is bound at residue 158 to 213 (VNTLGLPLIVKPVHEGSSIGMSKVNTLDELPKAYEVAAGCGDVVMAEKWITGREFT). Residues D283, E296, and N298 each contribute to the Mg(2+) site.

This sequence belongs to the D-alanine--D-alanine ligase family. Requires Mg(2+) as cofactor. Mn(2+) is required as a cofactor.

The protein resides in the cytoplasm. It carries out the reaction 2 D-alanine + ATP = D-alanyl-D-alanine + ADP + phosphate + H(+). It participates in cell wall biogenesis; peptidoglycan biosynthesis. Functionally, cell wall formation. This Psychrobacter sp. (strain PRwf-1) protein is D-alanine--D-alanine ligase.